The sequence spans 347 residues: S-adenosylmethionine:tRNA ribosyltransferase-isomerase (347 aa).

This sequence belongs to the QueA family. As to quaternary structure, monomer.

The protein resides in the cytoplasm. It carries out the reaction 7-aminomethyl-7-carbaguanosine(34) in tRNA + S-adenosyl-L-methionine = epoxyqueuosine(34) in tRNA + adenine + L-methionine + 2 H(+). The protein operates within tRNA modification; tRNA-queuosine biosynthesis. Functionally, transfers and isomerizes the ribose moiety from AdoMet to the 7-aminomethyl group of 7-deazaguanine (preQ1-tRNA) to give epoxyqueuosine (oQ-tRNA). The polypeptide is S-adenosylmethionine:tRNA ribosyltransferase-isomerase (Methylococcus capsulatus (strain ATCC 33009 / NCIMB 11132 / Bath)).